The primary structure comprises 358 residues: Membrane-bound lytic murein transglycosylase C (358 aa).

The N-terminal stretch at 1 to 16 (MKKILALLVIAPLLIS) is a signal peptide. Cysteine 17 is lipidated: N-palmitoyl cysteine. Cysteine 17 carries S-diacylglycerol cysteine lipidation.

Belongs to the transglycosylase Slt family.

The protein localises to the cell outer membrane. The enzyme catalyses Exolytic cleavage of the (1-&gt;4)-beta-glycosidic linkage between N-acetylmuramic acid (MurNAc) and N-acetylglucosamine (GlcNAc) residues in peptidoglycan, from either the reducing or the non-reducing ends of the peptidoglycan chains, with concomitant formation of a 1,6-anhydrobond in the MurNAc residue.. Murein-degrading enzyme. May play a role in recycling of muropeptides during cell elongation and/or cell division. In Serratia proteamaculans (strain 568), this protein is Membrane-bound lytic murein transglycosylase C.